The sequence spans 114 residues: uncharacterized protein (114 aa).

Fe cation contacts are provided by cysteine 40, cysteine 106, and cysteine 108.

This sequence belongs to the HesB/IscA family. Ycf83 subfamily.

It is found in the plastid. The protein localises to the chloroplast. This is an uncharacterized protein from Pyropia yezoensis (Susabi-nori).